We begin with the raw amino-acid sequence, 787 residues long: Glycine-rich domain-containing protein 2 (787 aa).

As to expression, expressed in leaves, inflorescences, buds, flowers and immature siliques.

Its function is as follows. Involved in development and stress responses, probably through an auxin-dependent mechanism. The chain is Glycine-rich domain-containing protein 2 from Arabidopsis thaliana (Mouse-ear cress).